The chain runs to 93 residues: Putative regulatory protein Amet_2791 (93 aa).

It belongs to the RemA family.

This chain is Putative regulatory protein Amet_2791, found in Alkaliphilus metalliredigens (strain QYMF).